A 231-amino-acid chain; its full sequence is 2-C-methyl-D-erythritol 2,4-cyclodiphosphate synthase, chloroplastic (231 aa).

A chloroplast-targeting transit peptide spans 1 to 52 (MATSSTQLLLSSSSLFHSQITKKPFLLPATKIGVWRPKKSLSLSCRPSASVS). Asp-82 and His-84 together coordinate a divalent metal cation. Residues 82-84 (DLH), 108-109 (HS), 112-120 (DVLLHCVVD), 130-132 (DIG), 135-139 (FPDSD), Asp-139, 174-180 (LQRPKIS), and 205-209 (AKTHE) each bind substrate. Residue His-116 participates in a divalent metal cation binding.

It belongs to the IspF family. In terms of assembly, homotrimer. A divalent metal cation serves as cofactor.

The protein localises to the plastid. It localises to the chloroplast stroma. It carries out the reaction 4-CDP-2-C-methyl-D-erythritol 2-phosphate = 2-C-methyl-D-erythritol 2,4-cyclic diphosphate + CMP. It participates in isoprenoid biosynthesis; isopentenyl diphosphate biosynthesis via DXP pathway; isopentenyl diphosphate from 1-deoxy-D-xylulose 5-phosphate: step 4/6. Enzyme of the plastid non-mevalonate pathway for isoprenoid biosynthesis that converts 4-diphosphocytidyl-2C-methyl-D-erythritol 2-phosphate into 2C-methyl-D-erythritol 2,4-cyclodiphosphate and CMP. Is essential for chloroplast development. This is 2-C-methyl-D-erythritol 2,4-cyclodiphosphate synthase, chloroplastic from Arabidopsis thaliana (Mouse-ear cress).